A 491-amino-acid chain; its full sequence is MAHYPPSKDQLNELIQEVNQWAITNGLSMYPPKFEENPSNASVSPVTIYPTPIPRKCFDEAVQIQPVFNELYARITQDMAQPDSYLHKTTEALALSDSEFTGKLWSLYLATLKSAQYKKQNFRLGIFRSDYLIDKKKGTEQIKQVEFNTVSVSFAGLSEKVDRLHSYLNRANKYDPKGPIYNDQNMVISDSGYLLSKALAKAVESYKSQQSSSTTSDPIVAFIVQRNERNVFDQKVLELNLLEKFGTKSVRLTFDDVNDKLFIDDKTGKLFIRDTEQEIAVVYYRTGYTTTDYTSEKDWEARLFLEKSFAIKAPDLLTQLSGSKKIQQLLTDEGVLGKYISDAEKKSSLLKTFVKIYPLDDTKLGREGKRLALSEPSKYVLKPQREGGGNNVYKENIPNFLKGIEERHWDAYILMELIEPELNENNIILRDNKSYNEPIISELGIYGCVLFNDEQVLSNEFSGSLLRSKFNTSNEGGVAAGFGCLDSIILY.

Arg128 contributes to the substrate binding site. Glu146 contacts ATP. The Mg(2+) site is built by Glu146 and Asn148. Residues 150 to 153 (VSVS), 228 to 230 (ERN), Gln234, and 285 to 288 (RTGY) each bind substrate. ATP-binding positions include Lys324, 382-391 (KPQREGGGNN), Tyr393, 415-418 (MELI), and Glu442. Glu386 contributes to the Mg(2+) binding site. Arg467 is a binding site for substrate. ATP is bound by residues Lys469 and Glu475. 478-479 (VA) is a substrate binding site.

It belongs to the eukaryotic GSH synthase family. As to quaternary structure, homodimer. Mg(2+) serves as cofactor.

It carries out the reaction gamma-L-glutamyl-L-cysteine + glycine + ATP = glutathione + ADP + phosphate + H(+). It functions in the pathway sulfur metabolism; glutathione biosynthesis; glutathione from L-cysteine and L-glutamate: step 2/2. The sequence is that of Glutathione synthetase GSH2 (GSH2) from Saccharomyces cerevisiae (strain ATCC 204508 / S288c) (Baker's yeast).